Here is a 642-residue protein sequence, read N- to C-terminus: Transcription factor 4 (642 aa).

Polar residues predominate over residues 1-25 (MFSPPVSSGKNGPTSLASGHFTGSN). The essential for MYOD1 inhibition stretch occupies residues 1–59 (MFSPPVSSGKNGPTSLASGHFTGSNVEDRSSSGSWGNGGHPSPSRNYGDGTPYDHMTSR). Disordered stretches follow at residues 1 to 296 (MFSP…SQTG), 311 to 354 (HTNN…EGPL), 444 to 545 (PNQV…MANN), and 609 to 642 (KRRE…MGQM). Ser42, Ser63, and Ser68 each carry phosphoserine. Polar residues-rich tracts occupy residues 83 to 98 (GSYS…QGCH), 112 to 130 (GTLS…SSNN), 181 to 191 (PAASTFPSSFF), 218 to 230 (GSSS…SSYC), and 241 to 281 (PSHS…TDSI). Over residues 312–323 (TNNSFSSNPSTP) the composition is skewed to low complexity. Polar residues predominate over residues 340-349 (NGGQASSSPN). At Ser347 the chain carries Phosphoserine. Positions 354–375 (LHSLQSRIEDRLERLDDAIHVL) are leucine-zipper. 2 stretches are compositionally biased toward low complexity: residues 444 to 455 (PNQVPVPQLPVQ) and 478 to 487 (GQSVSSGSSE). Ser490 carries the post-translational modification Phosphoserine. 2 stretches are compositionally biased toward basic and acidic residues: residues 502-517 (KSSE…KDIK) and 530-545 (PEQK…MANN). Positions 539 to 592 (ERRMANNARERLRVRDINEAFKELGRMVQLHLKSDKPQTKLLILHQAVAVILSL) constitute a bHLH domain. The segment at 594–617 (QQVRERNLNPKAACLKRREEEKVS) is class A specific domain.

In terms of assembly, efficient DNA binding requires dimerization with another bHLH protein. Forms homo- or heterooligomers with myogenin. Interacts with HIVEP2. Interacts with NEUROD2. Interacts with AGBL1. As to expression, widely expressed.

The protein localises to the nucleus. Transcription factor that binds to the immunoglobulin enhancer Mu-E5/KE5-motif. Involved in the initiation of neuronal differentiation. Activates transcription by binding to the E box (5'-CANNTG-3'). Binds to the thyroglobulin promoter. This is Transcription factor 4 (TCF4) from Canis lupus familiaris (Dog).